We begin with the raw amino-acid sequence, 387 residues long: UDP-N-acetylglucosamine--N-acetylmuramyl-(pentapeptide) pyrophosphoryl-undecaprenol N-acetylglucosamine transferase (387 aa).

UDP-N-acetyl-alpha-D-glucosamine-binding positions include 14-16 (TGG), asparagine 124, arginine 167, serine 195, and glutamine 296. Positions 366 to 387 (LPQQNSIEEDSTFEKNQEGAVA) are disordered. The span at 377–387 (TFEKNQEGAVA) shows a compositional bias: basic and acidic residues.

The protein belongs to the glycosyltransferase 28 family. MurG subfamily.

The protein localises to the cell inner membrane. It carries out the reaction di-trans,octa-cis-undecaprenyl diphospho-N-acetyl-alpha-D-muramoyl-L-alanyl-D-glutamyl-meso-2,6-diaminopimeloyl-D-alanyl-D-alanine + UDP-N-acetyl-alpha-D-glucosamine = di-trans,octa-cis-undecaprenyl diphospho-[N-acetyl-alpha-D-glucosaminyl-(1-&gt;4)]-N-acetyl-alpha-D-muramoyl-L-alanyl-D-glutamyl-meso-2,6-diaminopimeloyl-D-alanyl-D-alanine + UDP + H(+). It participates in cell wall biogenesis; peptidoglycan biosynthesis. Cell wall formation. Catalyzes the transfer of a GlcNAc subunit on undecaprenyl-pyrophosphoryl-MurNAc-pentapeptide (lipid intermediate I) to form undecaprenyl-pyrophosphoryl-MurNAc-(pentapeptide)GlcNAc (lipid intermediate II). In Zymomonas mobilis subsp. mobilis (strain ATCC 31821 / ZM4 / CP4), this protein is UDP-N-acetylglucosamine--N-acetylmuramyl-(pentapeptide) pyrophosphoryl-undecaprenol N-acetylglucosamine transferase.